The following is a 445-amino-acid chain: MRRSKQGAEGKAEKKAARSAGVCRTTLPGGLRVVTEHLPAVRSASVGVWVGVGSRDEGATVAGAAHFLEHLLFKSTSTRTAMDIAQAIDAVGGELNAFTAKEHTCYYAHVLDSDLELAVDLVADVVLNGRCAVDDVELERDVVLEEIAMRDDDPEDALGDMFLAALFGDHPVGRPVIGTMESVSAMTRTQLHSFHVRRYTPERMVVAVAGNVDHDEMVALVREHFGSRLIRGRQSAPPRKSTGRINGGPALTLGKRDAEQTHVLLGVRTPGRSWEHRWALSVLHTALGGGLSSRLFQEIRETRGLAYSVYSALDIFADSGALSVYAACLPGRFADVMQVISEVLASVAGDGITEAECRIAKGSLRGGIILGLEDSNSWMSRLGRSELNYGKYRGIEHTLQQIDEVTVEQVNALAHQLLNKRYGAAVLGPYASKKTLPRQLRIMVN.

His-66 contacts Zn(2+). Glu-69 acts as the Proton acceptor in catalysis. Zn(2+) contacts are provided by His-70 and Glu-146. The interval Gly-232–Leu-251 is disordered.

This sequence belongs to the peptidase M16 family. Requires Zn(2+) as cofactor.

This is an uncharacterized protein from Mycobacterium leprae (strain TN).